We begin with the raw amino-acid sequence, 581 residues long: Intermediate filament protein ifa-3 (581 aa).

A disordered region spans residues 1–33 (MADPDSYRSSITSRPAFNRTVTSSTQNYGTPAS). Positions 1–74 (MADPDSYRSS…RDDREREKKE (74 aa)) are head. Residues 7 to 33 (YRSSITSRPAFNRTVTSSTQNYGTPAS) show a composition bias toward polar residues. One can recognise an IF rod domain in the interval 71–424 (EKKEITELND…RMLEGNSEEN (354 aa)). Residues 75–106 (ITELNDRLASYIGKVRFLAAQNRKLEADLNVL) are coil 1A. The linker 1 stretch occupies residues 107–120 (QSRFGKSTGSVKIM). The tract at residues 121–258 (YEMEITTATN…RGFETELKDL (138 aa)) is coil 1B. Positions 259–276 (QAQAARDTTSENREYFKN) are linker 12. The segment at 277–424 (ELMNSIRDIR…RMLEGNSEEN (148 aa)) is coil 2. The interval 425 to 578 (GLRQLVEKVV…THMQRQSQQT (154 aa)) is tail. The 118-residue stretch at 457–574 (SRTSYQRSAK…EERATHMQRQ (118 aa)) folds into the LTD domain.

Belongs to the intermediate filament family. In terms of assembly, forms some heteromeric filaments with ifb-1. Expressed in the embryonic and larval hypodermis. Also expressed in the ventral nerve cord of larvae.

It localises to the cytoplasm. Cytoplasmic intermediate filaments provide mechanical strength to cells. Essential protein, involved in attachment structures in epidermal cells that connect muscles to the external cuticle. Required for epidermal morphogenesis in embryos. Probable component of embryonic epidermal attachment structures. In Caenorhabditis elegans, this protein is Intermediate filament protein ifa-3 (ifa-3).